Here is a 297-residue protein sequence, read N- to C-terminus: MCAKLVEMAFGPVNADSPPLTAEEKESAVEKLVGSKPFPALKKKYHDKVPAQDPKYCLFSFVEVLPSCDIKAAGAEEMCSCCIKRRRGQVFGVACVRGTAHTLAKAKQKADKLVGDYDSVHVVQTCHVGRPFPLVSSGMAQETVAPSAMEAAEAAMDAKSAEKRKERMRQKLEMRKREQEIKARNRKLLEDPSCDPDAEEETDLERYATLRVKTTCLLENAKNASAQIKEYLASMRKSAEAVVAMEAADPTLVENYPGLIRDSRAKMGVSKQDTEAFLKMSSFDCLTAASELETMGF.

This is an uncharacterized protein from Frog virus 3 (isolate Goorha) (FV-3).